The primary structure comprises 171 residues: Spiderine-2a (171 aa).

Positions 1–18 (MKFALVLLGVCAFYLVNA) are cleaved as a signal peptide. Residues 19 to 58 (TGDLETELEASELQELQEALDLIAETPLESLEAEELEEAR) constitute a propeptide, removed in mature form. A linear cationic cytotoxin domain region spans residues 59–104 (KFKLPKINWGKLASKAKDVYKKGQKLAKNKNVKKALKYGKQLAENL). Residues 118–171 (NNKCWAIGTRCTDDCDCCPEHHCHCPAKSWTFGLIPCSCQVTESDKVNKCPPAE) form the Oxytoxin-type inhibitor cystine knot (ICK) domain. 5 cysteine pairs are disulfide-bonded: cysteine 121–cysteine 135, cysteine 128–cysteine 140, cysteine 132–cysteine 167, cysteine 134–cysteine 156, and cysteine 142–cysteine 154.

Post-translationally, disulfide bonds. Expressed by the venom gland.

Its subcellular location is the secreted. Its function is as follows. Has antimicrobial, insecticidal, cytolytic and cytotoxic activity. This Oxyopes takobius (Lynx spider) protein is Spiderine-2a.